A 301-amino-acid chain; its full sequence is Glycosyltransferase GlyG (301 aa).

Belongs to the glycosyltransferase 2 family.

It functions in the pathway protein modification; protein glycosylation. Involved in the polymorphic O-glycosylation of the serine-rich repeat protein PsrP. Catalyzes the third step in glycosylation PsrP in this bacteria. Transfers glucose from UDP-glucose to the terminal glucose moiety of already-glycosylated PsrP (using truncated substrates with PsrP SSR1-GlcNAc-Glc). Has a marked preference for PsrP substrate that has already been modified by GlcNAc and glucose. In vitro has hydrolytic activity against UDP-glucose and to a lesser extent against UDP-galactose. Functionally, also catalyzes the fourth step in glycosylation of the serine-rich repeat protein PsrP in this bacteria. Can transfer the sugar from UDP-glucose (and much less well from UDP-galactose) to the terminal sugar moiety of PsrP-GlcNAc-Glc-Gal or of PsrP-GlcNAc-Glc-Glc. This is Glycosyltransferase GlyG from Streptococcus pneumoniae serotype 4 (strain ATCC BAA-334 / TIGR4).